The primary structure comprises 284 residues: Small ribosomal subunit protein uS2 (284 aa).

The segment covering 250-272 (QELLAGATASPTAAGAAPGTPEA) has biased composition (low complexity). The interval 250-284 (QELLAGATASPTAAGAAPGTPEADIQTEPTAPQNP) is disordered.

It belongs to the universal ribosomal protein uS2 family.

This is Small ribosomal subunit protein uS2 from Mycobacterium sp. (strain KMS).